Consider the following 334-residue polypeptide: Cell division protein ZipA (334 aa).

Residues 1–2 (ME) are Periplasmic-facing. A helical transmembrane segment spans residues 3–23 (LHIIFLILGGLLIVLLAGFSI). Over 24–334 (YSARREKSRI…DRQAYFARVS (311 aa)) the chain is Cytoplasmic.

It belongs to the ZipA family. As to quaternary structure, interacts with FtsZ via their C-terminal domains.

It localises to the cell inner membrane. Functionally, essential cell division protein that stabilizes the FtsZ protofilaments by cross-linking them and that serves as a cytoplasmic membrane anchor for the Z ring. Also required for the recruitment to the septal ring of downstream cell division proteins. This is Cell division protein ZipA from Haemophilus ducreyi (strain 35000HP / ATCC 700724).